The sequence spans 405 residues: Adenosylhomocysteinase (405 aa).

Positions 113 and 138 each coordinate substrate. 139–141 (TTT) lines the NAD(+) pocket. Substrate is bound by residues Lys-168 and Asp-172. Residues Asn-173, 202-207 (GYGWCG), Glu-225, Asn-260, 281-283 (AGH), and Asn-327 contribute to the NAD(+) site.

Belongs to the adenosylhomocysteinase family. The cofactor is NAD(+).

It is found in the cytoplasm. The catalysed reaction is S-adenosyl-L-homocysteine + H2O = L-homocysteine + adenosine. Its pathway is amino-acid biosynthesis; L-homocysteine biosynthesis; L-homocysteine from S-adenosyl-L-homocysteine: step 1/1. In terms of biological role, may play a key role in the regulation of the intracellular concentration of adenosylhomocysteine. This Archaeoglobus fulgidus (strain ATCC 49558 / DSM 4304 / JCM 9628 / NBRC 100126 / VC-16) protein is Adenosylhomocysteinase.